The chain runs to 281 residues: Bifunctional protein FolD (281 aa).

NADP(+)-binding positions include 165-167 and Ser190; that span reads GRS.

The protein belongs to the tetrahydrofolate dehydrogenase/cyclohydrolase family. Homodimer.

It carries out the reaction (6R)-5,10-methylene-5,6,7,8-tetrahydrofolate + NADP(+) = (6R)-5,10-methenyltetrahydrofolate + NADPH. It catalyses the reaction (6R)-5,10-methenyltetrahydrofolate + H2O = (6R)-10-formyltetrahydrofolate + H(+). Its pathway is one-carbon metabolism; tetrahydrofolate interconversion. Functionally, catalyzes the oxidation of 5,10-methylenetetrahydrofolate to 5,10-methenyltetrahydrofolate and then the hydrolysis of 5,10-methenyltetrahydrofolate to 10-formyltetrahydrofolate. This chain is Bifunctional protein FolD, found in Polaromonas naphthalenivorans (strain CJ2).